The following is a 102-amino-acid chain: Protein CASC2, isoform 3 (102 aa).

In terms of tissue distribution, expressed in normal and neoplastic endometrial tissues.

May act as a potential tumor suppressor. The polypeptide is Protein CASC2, isoform 3 (CASC2) (Homo sapiens (Human)).